The primary structure comprises 201 residues: Probable molybdenum cofactor guanylyltransferase (201 aa).

Residues 16 to 18 (LAG), K28, D75, and D107 each bind GTP. Residue D107 participates in Mg(2+) binding.

The protein belongs to the MobA family. It depends on Mg(2+) as a cofactor.

The protein resides in the cytoplasm. It catalyses the reaction Mo-molybdopterin + GTP + H(+) = Mo-molybdopterin guanine dinucleotide + diphosphate. Transfers a GMP moiety from GTP to Mo-molybdopterin (Mo-MPT) cofactor (Moco or molybdenum cofactor) to form Mo-molybdopterin guanine dinucleotide (Mo-MGD) cofactor. This Mycobacterium ulcerans (strain Agy99) protein is Probable molybdenum cofactor guanylyltransferase.